Reading from the N-terminus, the 469-residue chain is MPREIITIQVGQCGNQIGMEFWKQLCLEHGIGKDGLLEDFATQGGDRKDVFFYQADDQHYIPRALLVDLEPRVINGIQNSEYRNLYNHENIFVAEHGGGAGNNWASGYHQGEQVVDDIMDMIDREADGSDSLEGFVLCHSIAGGTGSGMGSYLLETLNDRYSKKLVQTYSVFPNQMETSDVVVQPYNSLLTLKRLTLNADCVVVLDNTALNRIAVERLHLANPTFAQTNSLVSTVMSASTTTLRYPGYMNNDLVGLLASLIPTPRCHFLMTGYTPLTVERQVNMIRKTTVLDVMRRLLQTKNIMVSSYARNKEASQAKYISILNIIQGEVDPTQVHESLQRIRERKLVNFIEWGPASIQVALSRKSPYVQTTHRVSGLMLANHTSIRHLFSKCLGQYEKLRKKQAFLDNYRKFPMFEDNDLSEFDESREIIESLVDEYKACESPDYIKWGMEDAGEANVAAALDSKLVV.

A GTP-binding site is contributed by 142-148 (AGGTGSG).

Belongs to the tubulin family.

It is found in the cytoplasm. The protein localises to the cytoskeleton. Its subcellular location is the microtubule organizing center. In terms of biological role, tubulin is the major constituent of microtubules. The gamma chain is found at microtubule organizing centers (MTOC) such as the spindle poles, suggesting that it is involved in the minus-end nucleation of microtubule assembly. The polypeptide is Tubulin gamma-2 chain (TUBG2) (Oryza sativa subsp. japonica (Rice)).